The primary structure comprises 423 residues: AUGMIN subunit 4 (423 aa).

Positions 267–287 form a coiled coil; that stretch reads IEEIERDEAALREDLYSADRK.

This sequence belongs to the HAUS4 family. Part of the augmin complex composed of 8 subunits. The complex acts on microtubules and interacts with gamma-tubulin in spindles and the phragmoplast.

The protein resides in the cytoplasm. It is found in the cytoskeleton. It localises to the spindle. The protein localises to the phragmoplast. Its function is as follows. Involved in microtubules reorganization during spindle and phragmoplast development. The sequence is that of AUGMIN subunit 4 (AUG4) from Arabidopsis thaliana (Mouse-ear cress).